A 108-amino-acid polypeptide reads, in one-letter code: MAIIYLILLFTAVRGDQICIGYHANNSTEKVDTILERNVTVTHAKDILEKTHNGKLCKLNGIPPLELGDCSIAGWLLGNPECDRLLSVPEWSYIMEKENPRDGLCYPG.

The signal sequence occupies residues 1-15 (MAIIYLILLFTAVRG). 3 N-linked (GlcNAc...) asparagine; by host glycosylation sites follow: asparagine 25, asparagine 26, and asparagine 38.

Belongs to the influenza viruses hemagglutinin family. As to quaternary structure, homotrimer of disulfide-linked HA1-HA2. In natural infection, inactive HA is matured into HA1 and HA2 outside the cell by one or more trypsin-like, arginine-specific endoprotease secreted by the bronchial epithelial cells. One identified protease that may be involved in this process is secreted in lungs by club cells. In terms of processing, palmitoylated.

It localises to the virion membrane. It is found in the host apical cell membrane. Binds to sialic acid-containing receptors on the cell surface, bringing about the attachment of the virus particle to the cell. This attachment induces virion internalization of about two third of the virus particles through clathrin-dependent endocytosis and about one third through a clathrin- and caveolin-independent pathway. Plays a major role in the determination of host range restriction and virulence. Class I viral fusion protein. Responsible for penetration of the virus into the cell cytoplasm by mediating the fusion of the membrane of the endocytosed virus particle with the endosomal membrane. Low pH in endosomes induces an irreversible conformational change in HA2, releasing the fusion hydrophobic peptide. Several trimers are required to form a competent fusion pore. The chain is Hemagglutinin (HA) from Influenza A virus (strain A/RI/5-/1957 H2N2).